Here is a 493-residue protein sequence, read N- to C-terminus: 3-octaprenyl-4-hydroxybenzoate carboxy-lyase (493 aa).

Residue asparagine 172 participates in Mn(2+) binding. Residues 175-177 (IYR), 189-191 (RWL), and 194-195 (RG) contribute to the prenylated FMN site. Position 238 (glutamate 238) interacts with Mn(2+). Aspartate 287 (proton donor) is an active-site residue.

It belongs to the UbiD family. Homohexamer. The cofactor is prenylated FMN. It depends on Mn(2+) as a cofactor.

It localises to the cell membrane. It catalyses the reaction a 4-hydroxy-3-(all-trans-polyprenyl)benzoate + H(+) = a 2-(all-trans-polyprenyl)phenol + CO2. It functions in the pathway cofactor biosynthesis; ubiquinone biosynthesis. Functionally, catalyzes the decarboxylation of 3-octaprenyl-4-hydroxy benzoate to 2-octaprenylphenol, an intermediate step in ubiquinone biosynthesis. In Shewanella baltica (strain OS195), this protein is 3-octaprenyl-4-hydroxybenzoate carboxy-lyase.